Consider the following 397-residue polypeptide: uncharacterized protein (397 aa).

Residues S115 and S141 each carry the phosphoserine modification. Residues 135 to 156 (NSLNHDSPPHTPARRSDNSTSK) are disordered. K239 participates in a covalent cross-link: Glycyl lysine isopeptide (Lys-Gly) (interchain with G-Cter in SUMO2). A phosphoserine mark is found at S269 and S296. The interval 289–316 (GRGPTKASPQPALTVKAKATSSATTLAS) is disordered. Over residues 300–316 (ALTVKAKATSSATTLAS) the composition is skewed to low complexity. At S342 the chain carries Phosphoserine. The segment at 354-397 (SEAQDSQVTSTKSPTVRCIVPDPPAPLASQRPPRRRWRRTCKDC) is disordered. Residues 356-367 (AQDSQVTSTKSP) are compositionally biased toward polar residues. The segment covering 385–397 (PPRRRWRRTCKDC) has biased composition (basic residues).

This is an uncharacterized protein from Rattus norvegicus (Rat).